The following is a 199-amino-acid chain: uncharacterized protein (199 aa).

The first 23 residues, M1–A23, serve as a signal peptide directing secretion. N19 and N26 each carry an N-linked (GlcNAc...) asparagine glycan. Residues S24 to T60 are Extracellular-facing. The helical transmembrane segment at L61–F81 threads the bilayer. At H82–S199 the chain is on the cytoplasmic side. The segment at M93–E190 is disordered. 2 stretches are compositionally biased toward basic and acidic residues: residues R95 to S106 and H124 to R135. The span at S147–P163 shows a compositional bias: low complexity. Over residues C164 to Q176 the composition is skewed to pro residues.

It localises to the membrane. This is an uncharacterized protein from Mus musculus (Mouse).